The primary structure comprises 187 residues: Dihydrofolate reductase type A10 (187 aa).

A DHFR domain is found at 2 to 174 (NISLIFANEL…YSLSIDKFVR (173 aa)).

It belongs to the dihydrofolate reductase family. In terms of assembly, homodimer.

The enzyme catalyses (6S)-5,6,7,8-tetrahydrofolate + NADP(+) = 7,8-dihydrofolate + NADPH + H(+). It participates in cofactor biosynthesis; tetrahydrofolate biosynthesis; 5,6,7,8-tetrahydrofolate from 7,8-dihydrofolate: step 1/1. Key enzyme in folate metabolism. Catalyzes an essential reaction for de novo glycine and purine synthesis, and for DNA precursor synthesis. The protein is Dihydrofolate reductase type A10 (dfrA10) of Escherichia coli.